Consider the following 382-residue polypeptide: UDP-N-acetylglucosamine--N-acetylmuramyl-(pentapeptide) pyrophosphoryl-undecaprenol N-acetylglucosamine transferase (382 aa).

UDP-N-acetyl-alpha-D-glucosamine contacts are provided by residues 17-19, Asn137, Arg179, Ser213, and Gln308; that span reads TAG.

Belongs to the glycosyltransferase 28 family. MurG subfamily.

The protein resides in the cell membrane. It catalyses the reaction di-trans,octa-cis-undecaprenyl diphospho-N-acetyl-alpha-D-muramoyl-L-alanyl-D-glutamyl-meso-2,6-diaminopimeloyl-D-alanyl-D-alanine + UDP-N-acetyl-alpha-D-glucosamine = di-trans,octa-cis-undecaprenyl diphospho-[N-acetyl-alpha-D-glucosaminyl-(1-&gt;4)]-N-acetyl-alpha-D-muramoyl-L-alanyl-D-glutamyl-meso-2,6-diaminopimeloyl-D-alanyl-D-alanine + UDP + H(+). Its pathway is cell wall biogenesis; peptidoglycan biosynthesis. Its function is as follows. Cell wall formation. Catalyzes the transfer of a GlcNAc subunit on undecaprenyl-pyrophosphoryl-MurNAc-pentapeptide (lipid intermediate I) to form undecaprenyl-pyrophosphoryl-MurNAc-(pentapeptide)GlcNAc (lipid intermediate II). This Rhodococcus jostii (strain RHA1) protein is UDP-N-acetylglucosamine--N-acetylmuramyl-(pentapeptide) pyrophosphoryl-undecaprenol N-acetylglucosamine transferase.